A 140-amino-acid chain; its full sequence is Gas vesicle protein O (140 aa).

Basic and acidic residues predominate over residues 1 to 14 (MSDQGNEHANHDGI). The interval 1-61 (MSDQGNEHAN…DSTIGLSDAQ (61 aa)) is disordered. Residues 39-56 (QTASDEAVSNQSPDSTIG) are compositionally biased toward polar residues.

This sequence belongs to the gas vesicle GvpO family. Forms homodimers, forms a GvpN-GvpO heterodimer, interacts with GvpC, GvpF, GvpI and GvpL, might interact with GvpA.

It is found in the gas vesicle. Its subcellular location is the cytoplasm. In terms of biological role, a minor component of the gas vesicle (GV), may play a role in transcription and/or RNA stability and/or in GV assembly. Gas vesicles are small, hollow, gas filled protein structures found in some microorganisms. They allow positioning of halobacteria at the optimal depth for growth in the poorly aerated shallow brine pools of their habitat. Its function is as follows. Expression of a 9.5 kb mc-vac DNA fragment containing 2 divergently transcribed regions (gvpD-gvpE-gvpF-gvpG-gvpH-gvpI-gvpJ-gvpK-gvpL-gvpM and gvpA-gvpC-gvpN-gvpO) allows H.volcanii to produce gas vesicles. The sequence is that of Gas vesicle protein O from Haloferax mediterranei (strain ATCC 33500 / DSM 1411 / JCM 8866 / NBRC 14739 / NCIMB 2177 / R-4) (Halobacterium mediterranei).